The chain runs to 136 residues: S-protein homolog 17 (136 aa).

An N-terminal signal peptide occupies residues 1 to 22; the sequence is MKNLSIFMFVFSLCMFGHVSRA.

Belongs to the plant self-incompatibility (S1) protein family.

Its subcellular location is the secreted. The sequence is that of S-protein homolog 17 from Arabidopsis thaliana (Mouse-ear cress).